The following is a 309-amino-acid chain: Porphobilinogen deaminase (309 aa).

The residue at position 244 (Cys-244) is an S-(dipyrrolylmethanemethyl)cysteine.

This sequence belongs to the HMBS family. Monomer. Requires dipyrromethane as cofactor.

The catalysed reaction is 4 porphobilinogen + H2O = hydroxymethylbilane + 4 NH4(+). It functions in the pathway porphyrin-containing compound metabolism; protoporphyrin-IX biosynthesis; coproporphyrinogen-III from 5-aminolevulinate: step 2/4. Tetrapolymerization of the monopyrrole PBG into the hydroxymethylbilane pre-uroporphyrinogen in several discrete steps. This chain is Porphobilinogen deaminase, found in Listeria monocytogenes serotype 4b (strain CLIP80459).